Reading from the N-terminus, the 210-residue chain is Orotate phosphoribosyltransferase (210 aa).

5-phospho-alpha-D-ribose 1-diphosphate contacts are provided by residues R96, K100, H102, and 122-130 (EDLISTGGS). S126 is a binding site for orotate.

Belongs to the purine/pyrimidine phosphoribosyltransferase family. PyrE subfamily. Homodimer. The cofactor is Mg(2+).

It carries out the reaction orotidine 5'-phosphate + diphosphate = orotate + 5-phospho-alpha-D-ribose 1-diphosphate. It participates in pyrimidine metabolism; UMP biosynthesis via de novo pathway; UMP from orotate: step 1/2. Catalyzes the transfer of a ribosyl phosphate group from 5-phosphoribose 1-diphosphate to orotate, leading to the formation of orotidine monophosphate (OMP). This chain is Orotate phosphoribosyltransferase, found in Streptococcus pneumoniae (strain ATCC BAA-255 / R6).